Reading from the N-terminus, the 1405-residue chain is Centlein (1405 aa).

The segment covering 1 to 14 has biased composition (pro residues); it reads MAARSPPSPHPSPP. Positions 1 to 79 are disordered; sequence MAARSPPSPH…GGAAPAHAPL (79 aa). A2 carries the N-acetylalanine modification. 2 positions are modified to phosphoserine: S5 and S22. Over residues 48 to 58 the composition is skewed to basic and acidic residues; that stretch reads VVADESDKIWV. The span at 61-71 shows a compositional bias: gly residues; that stretch reads EGSGGRRGPGG. Residues 95 to 126 are a coiled coil; that stretch reads EEAMVTRTQLLEEELSSLKEELALCQADKEFV. Disordered regions lie at residues 421–450 and 493–529; these read KLKE…QVPH and SRKS…EELQ. Coiled-coil stretches lie at residues 613–655 and 681–793; these read NELA…ELNR and KNGK…ELIN. The segment at 865–917 is disordered; that stretch reads WEDVSESSSDSEAQTSQTLGTIIVETSQKISPTEDGKDQKESDPTEDSQTQGK. Positions 877–895 are enriched in polar residues; sequence AQTSQTLGTIIVETSQKIS. Residues 896–907 are compositionally biased toward basic and acidic residues; that stretch reads PTEDGKDQKESD. Positions 980 to 1311 form a coiled coil; the sequence is NIILLRERII…IRELKKMKKN (332 aa). Position 1343 is a phosphothreonine (T1343).

Interacts with CEP250 and CEP68. Interacts with NEK2; the interaction leads to phosphorylation of CNTLN. Phosphorylated directly or indirectly by NEK2.

The protein resides in the cytoplasm. Its subcellular location is the cytoskeleton. It is found in the microtubule organizing center. It localises to the centrosome. The protein localises to the centriole. Its function is as follows. Required for centrosome cohesion and recruitment of CEP68 to centrosomes. This is Centlein (CNTLN) from Homo sapiens (Human).